The following is a 705-amino-acid chain: uncharacterized protein (705 aa).

A DNA-binding region (zn(2)-C6 fungal-type) is located at residues 24-52 (CHFCRVRKLKCDRVRPFCGSCSSRNRKQC).

It localises to the nucleus. This is an uncharacterized protein from Saccharomyces cerevisiae (strain ATCC 204508 / S288c) (Baker's yeast).